A 2190-amino-acid chain; its full sequence is Highly-reducing polyketide synthase 1 (2190 aa).

The 426-residue stretch at 6–431 (LTPVAIVGYA…GANAHVVLGA (426 aa)) folds into the Ketosynthase family 3 (KS3) domain. Residues C179, H315, and H355 each act as for beta-ketoacyl synthase activity in the active site. The 317-residue stretch at 541 to 857 (FVFTGQGAQW…VSVLARGQNA (317 aa)) folds into the Malonyl-CoA:ACP transacylase (MAT) domain. Residues 925 to 1061 (NDLLGSLADW…GLVGVRNSPA (137 aa)) form an N-terminal hotdog fold region. In terms of domain architecture, PKS/mFAS DH spans 925–1246 (NDLLGSLADW…MTPLRESSGS (322 aa)). H957 acts as the Proton acceptor; for dehydratase activity in catalysis. The segment at 1089–1246 (TETVDVQAMY…MTPLRESSGS (158 aa)) is C-terminal hotdog fold. The active-site Proton donor; for dehydratase activity is D1154. Positions 1494 to 1804 (GSLDSFYFVD…SGKSMGKLVI (311 aa)) constitute an Enoyl reductase (ER) domain. In terms of domain architecture, Ketoreductase (KR) spans 1828-2005 (ASYLIVGGTG…GTSLDLTAVS (178 aa)). Positions 2107–2184 (KALEVLYGAL…ELAKLISKKS (78 aa)) constitute a Carrier domain. Position 2144 is an O-(pantetheine 4'-phosphoryl)serine (S2144).

Pantetheine 4'-phosphate serves as cofactor.

Highly-reducing polyketide synthase; part of the gene cluster that mediates the biosynthesis of liamocins, glycolipids (also called heavy oils) composed of a single mannitol or arabitol headgroup linked to either three, four or even six 3,5-dihydroxydecanoic ester tail-groups. Within the pathway, PKS1 is responsible for biosynthesis of 3,5-dihydroxydecanoic acid from acetyl-CoA and malonyl-CoA. A phosphopantetheine transferase (PPTase) activates the HR-PKS. The esterase EST1 then catalyzes ester bond formation between 3,5-dihydroxydecanoic acid and mannitol (provided by the mannitol-1-phosphate 5-dehydrogenase and the NADP-dependent mannitol dehydrogenase) or arabinol (provided by the L-arabinitol 4-dehydrogenase). The protein is Highly-reducing polyketide synthase 1 of Aureobasidium melanogenum (Aureobasidium pullulans var. melanogenum).